Reading from the N-terminus, the 539-residue chain is Interleukin-2 receptor subunit beta (539 aa).

The first 26 residues, 1 to 26 (MATIALPWSLSLYVFLLLLATPWASA), serve as a signal peptide directing secretion. The Extracellular segment spans residues 27–240 (AVKNCSHLEC…RTRPADPMKE (214 aa)). Residues N30, N43, N55, and N71 are each glycosylated (N-linked (GlcNAc...) asparagine). A disulfide bridge connects residues C36 and C46. A disulfide bond links C74 and C86. The region spanning 135-235 (APHSLQVLHI…QPLTFRTRPA (101 aa)) is the Fibronectin type-III domain. N150 and N216 each carry an N-linked (GlcNAc...) asparagine glycan. The WSXWS motif motif lies at 221–225 (WSPWS). A helical membrane pass occupies residues 241–268 (ILPMSWLRYLLLVLGCFSGFFSCVYILV). Over 269–539 (KCRYLGPWLK…LQAQDSVHLI (271 aa)) the chain is Cytoplasmic. Residues 281 to 289 (LKCHIPDPS) carry the Box 1 motif motif. Disordered stretches follow at residues 395-419 (VEEDGSRLPEGSPHPPLLPLAGEQD), 440-465 (PNTAYGGSRAPEERSPLSLHEGLPSL), and 477-516 (LERMPEGDGEGLSANSSGEQASVPEGNLHGQDQDRGQGPI).

This sequence belongs to the type I cytokine receptor family. Type 4 subfamily. As to quaternary structure, non-covalent dimer of an alpha and a beta subunit. IL2R exists in 3 different forms: a high affinity dimer, an intermediate affinity monomer (beta subunit), and a low affinity monomer (alpha subunit). The high and intermediate affinity forms also associate with a gamma subunit. Interacts with SHB upon interleukin stimulation.

It is found in the cell membrane. Its subcellular location is the cell surface. Receptor for interleukin-2. This beta subunit is involved in receptor mediated endocytosis and transduces the mitogenic signals of IL2. Probably in association with IL15RA, involved in the stimulation of neutrophil phagocytosis by IL15. The protein is Interleukin-2 receptor subunit beta (Il2rb) of Mus musculus (Mouse).